The primary structure comprises 736 residues: Subtilisin-like protease SBT4.11 (736 aa).

The signal sequence occupies residues 1 to 25; that stretch reads MAKRGAFSSFHSFLIVLLFLNSVLA. Positions 26 to 113 are cleaved as a propeptide — activation peptide; the sequence is VTHGHQDKQV…VFPNKKLKLQ (88 aa). Residues 35-112 enclose the Inhibitor I9 domain; that stretch reads VYIVYMGSLP…SVFPNKKLKL (78 aa). The Peptidase S8 domain occupies 117–579; it reads SWDFMGLKEG…AGHVDPIAAT (463 aa). Residue Asp145 is the Charge relay system of the active site. Residue Asn176 is glycosylated (N-linked (GlcNAc...) asparagine). The active-site Charge relay system is the His200. 2 N-linked (GlcNAc...) asparagine glycosylation sites follow: Asn215 and Asn223. The PA domain maps to 355–437; sequence KFPLVYGKSA…GLQKDDFESV (83 aa). Ser518 acts as the Charge relay system in catalysis. 5 N-linked (GlcNAc...) asparagine glycosylation sites follow: Asn555, Asn602, Asn638, Asn646, and Asn656.

It belongs to the peptidase S8 family. Post-translationally, the C-terminal propeptide is autocleaved.

The protein localises to the secreted. The sequence is that of Subtilisin-like protease SBT4.11 from Arabidopsis thaliana (Mouse-ear cress).